We begin with the raw amino-acid sequence, 86 residues long: Heat shock factor-binding protein (86 aa).

A coiled-coil region spans residues 34-63 (MSDSIITKIDDMGGRINELEQSINDLRAEM). The interval 42 to 52 (IDDMGGRINEL) is required for interactions with heat shock factors (HSFs). The tract at residues 59-86 (LRAEMGVEGTPPPASKSGDEPKTPASSS) is disordered.

It belongs to the HSBP1 family. As to quaternary structure, homohexamer. Interacts with HSFA1A, HSFA1B and HSFA2. As to expression, mostly expressed in siliques and flowers, and, to a lower extent, in roots, stems and leaves.

The protein localises to the nucleus. It localises to the cytoplasm. It is found in the cytosol. Negative regulator of the heat shock (HS) response. Affects negatively HSFA1B DNA-binding capacity in vitro. Involved in acquired thermotolerance but not basal thermotolerance. Crucial for seed development, after fertilization and during embryogenesis. This chain is Heat shock factor-binding protein, found in Arabidopsis thaliana (Mouse-ear cress).